Here is a 308-residue protein sequence, read N- to C-terminus: ATP synthase gamma chain (308 aa).

Belongs to the ATPase gamma chain family. F-type ATPases have 2 components, CF(1) - the catalytic core - and CF(0) - the membrane proton channel. CF(1) has five subunits: alpha(3), beta(3), gamma(1), delta(1), epsilon(1). CF(0) has three main subunits: a, b and c.

The protein localises to the cell membrane. Functionally, produces ATP from ADP in the presence of a proton gradient across the membrane. The gamma chain is believed to be important in regulating ATPase activity and the flow of protons through the CF(0) complex. This Saccharopolyspora erythraea (strain ATCC 11635 / DSM 40517 / JCM 4748 / NBRC 13426 / NCIMB 8594 / NRRL 2338) protein is ATP synthase gamma chain.